We begin with the raw amino-acid sequence, 373 residues long: tRNA-specific 2-thiouridylase MnmA (373 aa).

ATP contacts are provided by residues Gly12–Ser19 and Met38. The segment at Asn98–Asp100 is interaction with target base in tRNA. Cys103 functions as the Nucleophile in the catalytic mechanism. The cysteines at positions 103 and 200 are disulfide-linked. Gly127 is a binding site for ATP. Residues Lys150–Gln152 form an interaction with tRNA region. Cys200 functions as the Cysteine persulfide intermediate in the catalytic mechanism. The tract at residues Arg312–Tyr313 is interaction with tRNA.

Belongs to the MnmA/TRMU family.

The protein localises to the cytoplasm. It carries out the reaction S-sulfanyl-L-cysteinyl-[protein] + uridine(34) in tRNA + AH2 + ATP = 2-thiouridine(34) in tRNA + L-cysteinyl-[protein] + A + AMP + diphosphate + H(+). Its function is as follows. Catalyzes the 2-thiolation of uridine at the wobble position (U34) of tRNA, leading to the formation of s(2)U34. In Streptococcus agalactiae serotype Ia (strain ATCC 27591 / A909 / CDC SS700), this protein is tRNA-specific 2-thiouridylase MnmA.